Here is a 62-residue protein sequence, read N- to C-terminus: Potassium channel toxin alpha-KTx 6.21 (62 aa).

Positions 1 to 24 (MNAKLIYLLLVVTTMMLTFDTTQA) are cleaved as a signal peptide. Cystine bridges form between C29/C50, C35/C55, C39/C57, and C45/C60. V61 bears the Valine amide mark.

It belongs to the short scorpion toxin superfamily. Potassium channel inhibitor family. Alpha-KTx 06 subfamily. Post-translationally, C-terminal amidation is important for activity. There is a 50-70-fold decrease in ability to inhibit Kv1.2/KCNA2 when the toxin is not amidated. This decrease may be explained by a 23-fold slower association rate (k(on)) together with a 2-fold faster dissociation rate (k(off)). As to expression, expressed by the venom gland.

The protein localises to the secreted. Functionally, reversible blocker of voltage-gated potassium channels with fast binding and unbinding kinetics. Has highest activity on human voltage-gated potassium channel Kv1.2/KCNA2 channels (IC(50)=0.11-0.16 nM), whereas its affinity for other channels tested was in the nanomolar range (hKv1.1/KCNA1, IC(50)=253 nM; hKv1.3/KCNA3, IC(50)=91 nM; and hKCa3.1/KCNN4, IC(50)=70 nM). The chain is Potassium channel toxin alpha-KTx 6.21 from Urodacus yaschenkoi (Inland robust scorpion).